The following is a 301-amino-acid chain: Probable alpha-L-glutamate ligase (301 aa).

The ATP-grasp domain maps to Leu104–Glu287. ATP is bound by residues Lys141, Glu178–Phe179, Asp187, and Arg211–Asn213. 3 residues coordinate Mg(2+): Asp248, Glu260, and Asn262. Residues Asp248, Glu260, and Asn262 each coordinate Mn(2+).

This sequence belongs to the RimK family. Mg(2+) serves as cofactor. It depends on Mn(2+) as a cofactor.

The sequence is that of Probable alpha-L-glutamate ligase from Vibrio atlanticus (strain LGP32) (Vibrio splendidus (strain Mel32)).